Reading from the N-terminus, the 81-residue chain is Photosystem I iron-sulfur center (81 aa).

4Fe-4S ferredoxin-type domains are found at residues 2 to 31 and 39 to 68; these read SHSV…MIPW and IASA…VRVY. Positions 11, 14, 17, 21, 48, 51, 54, and 58 each coordinate [4Fe-4S] cluster.

The eukaryotic PSI reaction center is composed of at least 11 subunits. It depends on [4Fe-4S] cluster as a cofactor.

The protein localises to the plastid. It is found in the chloroplast thylakoid membrane. The catalysed reaction is reduced [plastocyanin] + hnu + oxidized [2Fe-2S]-[ferredoxin] = oxidized [plastocyanin] + reduced [2Fe-2S]-[ferredoxin]. Its function is as follows. Apoprotein for the two 4Fe-4S centers FA and FB of photosystem I (PSI); essential for photochemical activity. FB is the terminal electron acceptor of PSI, donating electrons to ferredoxin. The C-terminus interacts with PsaA/B/D and helps assemble the protein into the PSI complex. Required for binding of PsaD and PsaE to PSI. PSI is a plastocyanin-ferredoxin oxidoreductase, converting photonic excitation into a charge separation, which transfers an electron from the donor P700 chlorophyll pair to the spectroscopically characterized acceptors A0, A1, FX, FA and FB in turn. The chain is Photosystem I iron-sulfur center from Spinacia oleracea (Spinach).